The following is a 48-amino-acid chain: Delta-stichotoxin-Hmg4b (48 aa).

3 disulfides stabilise this stretch: Cys3–Cys43, Cys5–Cys33, and Cys26–Cys44.

Belongs to the sea anemone sodium channel inhibitory toxin family. Type II subfamily.

The protein resides in the secreted. It is found in the nematocyst. Its function is as follows. Binds specifically to voltage-gated sodium channels (Nav), thereby delaying their inactivation during signal transduction. Its toxicity is greater than that of RpII (AC P01534). The protein is Delta-stichotoxin-Hmg4b of Heteractis magnifica (Magnificent sea anemone).